The chain runs to 382 residues: UDP-4-amino-4-deoxy-L-arabinose--oxoglutarate aminotransferase (382 aa).

Lys183 is modified (N6-(pyridoxal phosphate)lysine).

It belongs to the DegT/DnrJ/EryC1 family. ArnB subfamily. Homodimer. It depends on pyridoxal 5'-phosphate as a cofactor.

It catalyses the reaction UDP-4-amino-4-deoxy-beta-L-arabinose + 2-oxoglutarate = UDP-beta-L-threo-pentopyranos-4-ulose + L-glutamate. It functions in the pathway nucleotide-sugar biosynthesis; UDP-4-deoxy-4-formamido-beta-L-arabinose biosynthesis; UDP-4-deoxy-4-formamido-beta-L-arabinose from UDP-alpha-D-glucuronate: step 2/3. Its pathway is bacterial outer membrane biogenesis; lipopolysaccharide biosynthesis. Its function is as follows. Catalyzes the conversion of UDP-4-keto-arabinose (UDP-Ara4O) to UDP-4-amino-4-deoxy-L-arabinose (UDP-L-Ara4N). The modified arabinose is attached to lipid A and is required for resistance to polymyxin and cationic antimicrobial peptides. The chain is UDP-4-amino-4-deoxy-L-arabinose--oxoglutarate aminotransferase from Pseudomonas aeruginosa (strain LESB58).